Here is a 317-residue protein sequence, read N- to C-terminus: (R)-citramalyl-CoA lyase (317 aa).

Residues 4-281 enclose the Pyruvate carboxyltransferase domain; the sequence is VTIVDVAPRD…PTGIDLSALI (278 aa). Residue Arg-12 coordinates substrate. A divalent metal cation-binding residues include Asp-13, His-214, and His-216. Residue Cys-247 is part of the active site. Asn-256 provides a ligand contact to a divalent metal cation.

It belongs to the HMG-CoA lyase family. Homodimer. Requires Mn(2+) as cofactor. Co(2+) is required as a cofactor. Ni(2+) serves as cofactor. The cofactor is Mg(2+).

It catalyses the reaction (3R)-citramalyl-CoA = pyruvate + acetyl-CoA. Its activity is regulated as follows. Activated by dithioerythritol (DTE) (in vitro). Involved in the glyoxylate assimilation cycle used to regenerate acetyl-CoA and produce pyruvate as universal precursor for biosynthesis. Catalyzes the cleavage of (R)-citramalyl-CoA to yield acetyl-CoA and pyruvate. This chain is (R)-citramalyl-CoA lyase (ccl), found in Chloroflexus aurantiacus (strain ATCC 29366 / DSM 635 / J-10-fl).